Reading from the N-terminus, the 1276-residue chain is Probable ubiquitin carboxyl-terminal hydrolase K02C4.3 (1276 aa).

Positions 168 to 762 (TGLYNSGNTC…SAYMLMYVRS (595 aa)) constitute a USP domain. Cysteine 177 serves as the catalytic Nucleophile. Residues 375–402 (SMDTEAATSSNLPGNSVENHPNPAAPEV) form a disordered region. Positions 380–393 (AATSSNLPGNSVEN) are enriched in polar residues. The Proton acceptor role is filled by histidine 707.

The protein belongs to the peptidase C19 family.

The enzyme catalyses Thiol-dependent hydrolysis of ester, thioester, amide, peptide and isopeptide bonds formed by the C-terminal Gly of ubiquitin (a 76-residue protein attached to proteins as an intracellular targeting signal).. This is Probable ubiquitin carboxyl-terminal hydrolase K02C4.3 from Caenorhabditis elegans.